The chain runs to 340 residues: MIFIDACFKKPTPYTPIWMMRQAGRYLPEYMEVRKQAGDFLSLCKDYKKASEVSLQPIDILDVDAAIIFSDILVVPLEMGMNLRFEKGEGPVFDNPISTLEDLEKLDDQNAHKKLNYVYDALKLTREKLSQNKALIGFCGSPWTIATYMIEGSGSKNYAKCKKMLYQNPELLHKILNKLTQVLKLYLEEQIKAGANAIQIFDSWASALEYDKFFEFSFNYMLEISNFIKSKYPNIPVILFPKGISGYLDRIDGNFDVFGVDWSTPLDLARDKLSHKYTLQGNMEPCRLYDKNAIKEGVEKILKTMQNKAHIFNLGHGILPDIPVENAKYFIKLVQESSAK.

Substrate-binding positions include 21–25, Asp-71, Tyr-148, Ser-203, and His-316; that span reads RQAGR.

Belongs to the uroporphyrinogen decarboxylase family. In terms of assembly, homodimer.

The protein localises to the cytoplasm. The catalysed reaction is uroporphyrinogen III + 4 H(+) = coproporphyrinogen III + 4 CO2. The protein operates within porphyrin-containing compound metabolism; protoporphyrin-IX biosynthesis; coproporphyrinogen-III from 5-aminolevulinate: step 4/4. In terms of biological role, catalyzes the decarboxylation of four acetate groups of uroporphyrinogen-III to yield coproporphyrinogen-III. In Campylobacter jejuni subsp. jejuni serotype O:6 (strain 81116 / NCTC 11828), this protein is Uroporphyrinogen decarboxylase.